Here is a 370-residue protein sequence, read N- to C-terminus: GDSL esterase/lipase At1g09390 (370 aa).

The N-terminal stretch at 1-27 (MATLSLHSHSFLLVLLPFILILRQNLA) is a signal peptide. S44 (nucleophile) is an active-site residue. Residues N90 and N315 are each glycosylated (N-linked (GlcNAc...) asparagine). Catalysis depends on residues D336 and H339.

It belongs to the 'GDSL' lipolytic enzyme family.

The protein localises to the secreted. This is GDSL esterase/lipase At1g09390 from Arabidopsis thaliana (Mouse-ear cress).